Reading from the N-terminus, the 238-residue chain is MIAFIVLLSLAAVLQQSSGTVDFASESSNKKDYRREIVDKHNALRRSVKPTARNMLQMKWNSRAAQNAKRSADRCTFAHSPEHTRTVGKFRCGENIFMSSQPFAWSGVVQDWYDEIKNVVDGIGAKPPGSVIGHYTQIVWYKSHLLGCASAKCSSTKYLYVCQYCPAGNISSSIATPYKSGPSCGDCPSACVNGLCTNPCEYEDTFSNCKALAKKTKCKTEWIKSKCPATCFCHNKII.

The first 19 residues, 1–19, serve as a signal peptide directing secretion; the sequence is MIAFIVLLSLAAVLQQSSG. An SCP domain is found at 38 to 164; the sequence is VDKHNALRRS…STKYLYVCQY (127 aa). 8 disulfides stabilise this stretch: Cys75–Cys153, Cys92–Cys165, Cys148–Cys162, Cys184–Cys191, Cys187–Cys196, Cys200–Cys233, Cys209–Cys227, and Cys218–Cys231. The ShKT domain maps to 200–233; sequence CEYEDTFSNCKALAKKTKCKTEWIKSKCPATCFC.

This sequence belongs to the CRISP family. As to expression, expressed by the venom gland.

It is found in the secreted. Blocks contraction of smooth muscle elicited by high potassium-induced depolarization, but does not block caffeine-stimulated contraction. May target voltage-gated calcium channels on smooth muscle. The protein is Cysteine-rich venom protein 1 of Hydrophis hardwickii (Hardwick's spine-bellied seasnake).